Here is a 91-residue protein sequence, read N- to C-terminus: DNA-binding protein HU-beta 2 (91 aa).

The protein belongs to the bacterial histone-like protein family.

In terms of biological role, histone-like DNA-binding protein which is capable of wrapping DNA to stabilize it, and thus to prevent its denaturation under extreme environmental conditions. The sequence is that of DNA-binding protein HU-beta 2 (hupB2) from Neisseria meningitidis serogroup A / serotype 4A (strain DSM 15465 / Z2491).